We begin with the raw amino-acid sequence, 380 residues long: L-lactate dehydrogenase (380 aa).

One can recognise an FMN hydroxy acid dehydrogenase domain in the interval 1–380 (MIISSTTDFR…DRSILAKTDR (380 aa)). Position 24 (Tyr24) interacts with substrate. FMN-binding residues include Ser106 and Gln127. Tyr129 serves as a coordination point for substrate. Thr155 serves as a coordination point for FMN. Arg164 provides a ligand contact to substrate. An FMN-binding site is contributed by Lys251. His275 serves as the catalytic Proton acceptor. Arg278 serves as a coordination point for substrate. 306-330 (DGGVRSGLDVVRMLALGAKGVLLGR) lines the FMN pocket.

Belongs to the FMN-dependent alpha-hydroxy acid dehydrogenase family. The cofactor is FMN.

It is found in the cell inner membrane. The enzyme catalyses (S)-lactate + A = pyruvate + AH2. Catalyzes the conversion of L-lactate to pyruvate. Is coupled to the respiratory chain. The sequence is that of L-lactate dehydrogenase from Caulobacter sp. (strain K31).